The chain runs to 951 residues: Leucine-rich repeat-containing G-protein coupled receptor 4 (951 aa).

Positions 1–24 (MPGPLGLLCFLALGLLGSAGPSGA) are cleaved as a signal peptide. The 33-residue stretch at 25–57 (APPLCAAPCSCDGDRRVDCSGKGLTAVPEGLSA) folds into the LRRNT domain. Over 25 to 544 (APPLCAAPCS…LLGSWMIRLT (520 aa)) the chain is Extracellular. Disulfide bonds link cysteine 29–cysteine 35 and cysteine 33–cysteine 43. 10 LRR repeats span residues 58–79 (FTQALDISMNNITQLPEDAFKN), 82–103 (FLEELQLAGNDLSFIHPKALSG), 106–127 (ELKVLTLQNNQLKTVPSEAIRG), 130–151 (ALQSLRLDANHITSVPEDSFEG), 154–177 (QLRHLWLDDNSLTEVPVHPLSNLP), 178–199 (TLQALTLALNKISSIPDFAFTN), 202–223 (SLVVLHLHNNKIRSLSQHCFDG), 226–247 (NLETLDLNYNNLGEFPQAIKAL), 249–270 (SLKELGFHSNSISVIPDGAFDG), and 273–294 (LLRTIHLYDNPLSFVGNSAFHN). Asparagine 68 is a glycosylation site (N-linked (GlcNAc...) asparagine). The N-linked (GlcNAc...) asparagine glycan is linked to asparagine 199. Asparagine 294 and asparagine 314 each carry an N-linked (GlcNAc...) asparagine glycan. LRR repeat units follow at residues 320 to 341 (HLESLTLTGTKISSIPNNLCQE), 344 to 365 (MLRTLDLSYNNIRDLPSFNGCH), 366 to 387 (ALEEISLQRNQIYQIKEGTFQG), 390 to 411 (SLRILDLSRNLIHEIHSRAFAT), and 414 to 435 (PITNLDVSFNELTSFPTEGLNG). Cysteine 339 and cysteine 364 are oxidised to a cystine. 2 disulfides stabilise this stretch: cysteine 470–cysteine 522 and cysteine 471–cysteine 476. An N-linked (GlcNAc...) asparagine glycan is attached at asparagine 505. A helical transmembrane segment spans residues 545–565 (VWFIFLVALFFNLLVILTTFA). Over 566–575 (SCTSLPSSKL) the chain is Cytoplasmic. Residues 576–596 (FIGLISVSNLFMGIYTGILTF) traverse the membrane as a helical segment. Over 597–620 (LDAVSWGRFAEFGIWWETGSGCKV) the chain is Extracellular. Cysteines 618 and 693 form a disulfide. A helical transmembrane segment spans residues 621-641 (AGFLAVFSSESAIFLLMLATV). At 642 to 661 (ERSLSAKDIMKNGKSNHLKQ) the chain is on the cytoplasmic side. The helical transmembrane segment at 662 to 682 (FRVAALLAFLGATVAGCFPLF) threads the bilayer. Residues 683-703 (HRGEYSASPLCLPFPTGETPS) are Extracellular-facing. The chain crosses the membrane as a helical span at residues 704-724 (LGFTVTLVLLNSLAFLLMAVI). Over 725–756 (YTKLYCNLEKEDLSENSQSSMIKHVAWLIFTN) the chain is Cytoplasmic. Residues 757 to 777 (CIFFCPVAFFSFAPLITAISI) traverse the membrane as a helical segment. Topologically, residues 778–783 (SPEIMK) are extracellular. The helical transmembrane segment at 784–804 (SVTLIFFPLPACLNPVLYVFF) threads the bilayer. Residues 805–951 (NPKFKEDWKL…YAYNLPRVKD (147 aa)) are Cytoplasmic-facing. Position 920 is a phosphoserine (serine 920).

It belongs to the G-protein coupled receptor 1 family. Expressed in multiple steroidogenic tissues: placenta, ovary, testis and adrenal. Expressed also in spinal cord, thyroid, stomach, trachea, heart, pancreas, kidney, prostate and spleen.

The protein localises to the cell membrane. In terms of biological role, receptor for R-spondins that potentiates the canonical Wnt signaling pathway and is involved in the formation of various organs. Upon binding to R-spondins (RSPO1, RSPO2, RSPO3 or RSPO4), associates with phosphorylated LRP6 and frizzled receptors that are activated by extracellular Wnt receptors, triggering the canonical Wnt signaling pathway to increase expression of target genes. In contrast to classical G-protein coupled receptors, does not activate heterotrimeric G-proteins to transduce the signal. Its function as activator of the Wnt signaling pathway is required for the development of various organs, including liver, kidney, intestine, bone, reproductive tract and eye. May also act as a receptor for norrin (NDP), such results however require additional confirmation in vivo. Required during spermatogenesis to activate the Wnt signaling pathway in peritubular myoid cells. Required for the maintenance of intestinal stem cells and Paneth cell differentiation in postnatal intestinal crypts. Acts as a regulator of bone formation and remodeling. Involved in kidney development; required for maintaining the ureteric bud in an undifferentiated state. Involved in the development of the anterior segment of the eye. Required during erythropoiesis. Also acts as a negative regulator of innate immunity by inhibiting TLR2/TLR4 associated pattern-recognition and pro-inflammatory cytokine production. Plays an important role in regulating the circadian rhythms of plasma lipids, partially through regulating the rhythmic expression of MTTP. Required for proper development of GnRH neurons (gonadotropin-releasing hormone expressing neurons) that control the release of reproductive hormones from the pituitary gland. This Homo sapiens (Human) protein is Leucine-rich repeat-containing G-protein coupled receptor 4 (LGR4).